The following is a 397-amino-acid chain: Lysophospholipid transporter LplT (397 aa).

At 1–17 (MSESVHTNTSLWSKGMK) the chain is on the periplasmic side. A helical transmembrane segment spans residues 18-38 (AVIVAQFLSAFGDNALLFATL). At 39–52 (ALLKAQFYPEWSQP) the chain is on the cytoplasmic side. A helical transmembrane segment spans residues 53 to 73 (ILQMVFVGAYILFAPFVGQVA). Over 74–90 (DSFAKGRVMMFANGLKL) the chain is Periplasmic. Residues 91–111 (LGAASICFGINPFLGYTLVGV) traverse the membrane as a helical segment. Topologically, residues 112–144 (GAAAYSPAKYGILGELTTGSKLVKANGLMEAST) are cytoplasmic. The chain crosses the membrane as a helical span at residues 145-165 (IAAILLGSVAGGVLADWHVLV). A topological domain (periplasmic) is located at residue alanine 166. The helical transmembrane segment at 167–187 (LAACALAYGGAVVANIYIPKL) threads the bilayer. At 188–226 (AAARPGQSWNLINMTRSFLNACTSLWRNGETRFSLVGTS) the chain is on the cytoplasmic side. The chain crosses the membrane as a helical span at residues 227–247 (LFWGAGVTLRFLLVLWVPVAL). At 248–256 (GITDNATPT) the chain is on the periplasmic side. A helical membrane pass occupies residues 257–277 (YLNAMVAIGIVVGAGAAAKLV). At 278-280 (TLE) the chain is on the cytoplasmic side. The helical transmembrane segment at 281–301 (TVSRCMPAGILIGVVVLIFSL) threads the bilayer. Residues 302-304 (QHE) lie on the Periplasmic side of the membrane. A helical transmembrane segment spans residues 305–325 (QLPAYALLMLIGVLGGFFVVP). The Cytoplasmic portion of the chain corresponds to 326 to 343 (LNALLQERGKKSVGAGNA). A helical transmembrane segment spans residues 344–364 (IAVQNLGENSAMLLMLGIYSL). The Periplasmic portion of the chain corresponds to 365–366 (AV). A helical membrane pass occupies residues 367–387 (MVGIPVVPIGIGFGALFALAI). Over 388–397 (TALWIWQRRH) the chain is Cytoplasmic.

The protein belongs to the major facilitator superfamily. LplT (TC 2.A.1.42) family.

The protein localises to the cell inner membrane. In terms of biological role, catalyzes the facilitated diffusion of 2-acyl-glycero-3-phosphoethanolamine (2-acyl-GPE) into the cell. This is Lysophospholipid transporter LplT from Escherichia coli O157:H7 (strain EC4115 / EHEC).